The sequence spans 691 residues: Lacticin-481/lactococcin-DR transport/processing ATP-binding protein lcnDR3 (691 aa).

In terms of domain architecture, Peptidase C39 spans 6 to 130 (QNNEQDCLLA…KKFSGYIITL (125 aa)). Residue Cys-12 is part of the active site. Positions 158 to 434 (TFLYIFSLFI…IQDVMFEISR (277 aa)) constitute an ABC transmembrane type-1 domain. 5 consecutive transmembrane segments (helical) span residues 159-179 (FLYIFSLFISQIVALWFSIIL), 189-209 (ITYSFIMMISLVLFQTLSLLM), 262-284 (GILLKIFPSLLNFFTVFIVIIYL), 289-311 (FTLTLFLVIMNLLYMIFSFSLIS), and 385-405 (ICVILMMIFGIYLNQGNLVSI). Residues 464–689 (IILKDISYSY…LLNDSYNSFV (226 aa)) form the ABC transporter domain. Position 497 to 504 (497 to 504 (GKSGSGKS)) interacts with ATP.

This sequence belongs to the ABC transporter superfamily.

Its subcellular location is the cell membrane. In terms of biological role, probably implicated in the export process of the lantibiotic lacticin-481/lactococcin-DR. The chain is Lacticin-481/lactococcin-DR transport/processing ATP-binding protein lcnDR3 (lcnDR3) from Lactococcus lactis subsp. lactis (Streptococcus lactis).